A 187-amino-acid polypeptide reads, in one-letter code: Putative manganese efflux pump MntP (187 aa).

6 helical membrane-spanning segments follow: residues 3–23 (WLTILGISVALAMDAFAVALA), 39–59 (LGFHFGLFQALMPIGGWLLGM), 65–85 (ISAYDHWIAFGLLVFVGGRMV), 103–123 (GMTMVMLSVATSIDAFAVGLS), 124–144 (IAMLGVSVWLPATVIGLVAGV), and 166–186 (ICGGLVLCLIGLKILLEHTLL).

The protein belongs to the MntP (TC 9.B.29) family.

The protein localises to the cell inner membrane. Functionally, probably functions as a manganese efflux pump. The protein is Putative manganese efflux pump MntP of Geobacter sp. (strain M21).